The primary structure comprises 211 residues: ATP-dependent Clp protease proteolytic subunit (211 aa).

Catalysis depends on Ser-114, which acts as the Nucleophile. His-139 is an active-site residue.

It belongs to the peptidase S14 family. Fourteen ClpP subunits assemble into 2 heptameric rings which stack back to back to give a disk-like structure with a central cavity, resembling the structure of eukaryotic proteasomes.

Its subcellular location is the cytoplasm. It carries out the reaction Hydrolysis of proteins to small peptides in the presence of ATP and magnesium. alpha-casein is the usual test substrate. In the absence of ATP, only oligopeptides shorter than five residues are hydrolyzed (such as succinyl-Leu-Tyr-|-NHMec, and Leu-Tyr-Leu-|-Tyr-Trp, in which cleavage of the -Tyr-|-Leu- and -Tyr-|-Trp bonds also occurs).. Functionally, cleaves peptides in various proteins in a process that requires ATP hydrolysis. Has a chymotrypsin-like activity. Plays a major role in the degradation of misfolded proteins. This Pseudomonas fluorescens (strain SBW25) protein is ATP-dependent Clp protease proteolytic subunit.